The following is an 845-amino-acid chain: uncharacterized protein (845 aa).

Residues serine 224–glycine 241 are compositionally biased toward polar residues. Disordered stretches follow at residues serine 224–glutamate 244, glutamine 324–glycine 346, arginine 383–alanine 434, valine 456–asparagine 485, asparagine 519–serine 619, valine 674–proline 701, and arginine 739–serine 785. Residues proline 390–glutamine 399 are compositionally biased toward basic and acidic residues. Residues serine 400–lysine 422 show a composition bias toward polar residues. Residues asparagine 534–asparagine 546 are compositionally biased toward basic and acidic residues. Residues serine 563 to leucine 576 are compositionally biased toward low complexity. Serine 567 is subject to Phosphoserine. Composition is skewed to basic and acidic residues over residues alanine 579 to cysteine 588 and alanine 600 to isoleucine 614. Composition is skewed to polar residues over residues valine 674–lysine 683, serine 691–proline 701, and alanine 743–alanine 760.

It is found in the mitochondrion. This is an uncharacterized protein from Schizosaccharomyces pombe (strain 972 / ATCC 24843) (Fission yeast).